The sequence spans 419 residues: MSAAASFKSEFLQTLQARGYIHQITHPDELDAAAAGGIVTAYIGFDATAPSLHVGSLIQIMMLRRLQQAGHKPIVLMGGGTTKVGDPTGKDESRKLLSDADIAANIAGIKQVFAKFLTFGDGPTDAIMVDNDVWLSKFGYVQFLRDYGVHFTVNRMLAFDSVKLRLEREQPMTFLEFNYMLMQAVDFLELNRAHGCVLQMGGSDQWGNILNGVELTRRVDHKAAFGLTTPLLATASGAKMGKTMSGAVWLNAEQLSPYDYWQFWRNTEDADVGRFLKLFTDLPLDEIARLEALPGAQINDAKKVLADEATRMAHGEDEARKARDAAEKAFEQGALSADLPTFEIAAAELKAGIVLANLFADAGLAASRGEARRLAQGGGVKVNDKAEPDANRVVTEADLVEGVVKLAAGKKKIVLVKPI.

An L-tyrosine-binding site is contributed by tyrosine 42. The 'HIGH' region motif lies at 47 to 56 (ATAPSLHVGS). L-tyrosine is bound by residues tyrosine 179 and glutamine 183. The 'KMSKS' region motif lies at 239-243 (KMGKT). Lysine 242 serves as a coordination point for ATP. The 66-residue stretch at 353–418 (IVLANLFADA…GKKKIVLVKP (66 aa)) folds into the S4 RNA-binding domain.

This sequence belongs to the class-I aminoacyl-tRNA synthetase family. TyrS type 1 subfamily. As to quaternary structure, homodimer.

It localises to the cytoplasm. It carries out the reaction tRNA(Tyr) + L-tyrosine + ATP = L-tyrosyl-tRNA(Tyr) + AMP + diphosphate + H(+). Its function is as follows. Catalyzes the attachment of tyrosine to tRNA(Tyr) in a two-step reaction: tyrosine is first activated by ATP to form Tyr-AMP and then transferred to the acceptor end of tRNA(Tyr). The protein is Tyrosine--tRNA ligase of Caulobacter sp. (strain K31).